Reading from the N-terminus, the 187-residue chain is Tetraheme c-type cytochrome CymA (187 aa).

Residues 1–12 are Cytoplasmic-facing; it reads MNWRALFKPSAK. The helical transmembrane segment at 13 to 33 threads the bilayer; it reads YSILALLVVGIVIGVVGYFAT. At 34-187 the chain is on the periplasmic side; that stretch reads QQTLHATSTD…KGVAHPYPKG (154 aa). The heme c site is built by Cys-46, Cys-49, His-64, Cys-75, Cys-78, His-79, Asp-97, Cys-136, Cys-139, His-140, Cys-173, Cys-176, His-177, and His-182.

The protein belongs to the NapC/NirT/NrfH family. Homodimer. The cofactor is heme c.

The protein localises to the cell inner membrane. The enzyme catalyses a quinol + 2 Fe(III)-[cytochrome c](out) = a quinone + 2 Fe(II)-[cytochrome c](out) + 2 H(+)(out). Its activity is regulated as follows. Spectroscopic studies suggest that CymA requires a non-heme cofactor for quinol oxidation. Functionally, quinol dehydrogenase involved in several anaerobic electron transfer pathways. Acquires electrons from the membrane quinone pool and mediates their transfer to several periplasmic terminal reductases and redox shuttles, including the fumarate reductase FccA, the small tetraheme cytochrome (STC), the c-type cytochrome MtrA, the nitrate reductase NapA (either through NapB or directly), the nitrite reductase NrfA and probably also the DmsE subunit of dimethyl sulfoxide (DMSO) reductase. Required for growth on fumarate and on DMSO, and for the reduction of iron(III), manganese(IV), nitrite and nitrate. Not essential for growth on trimethylamine-N-oxide (TMAO). The chain is Tetraheme c-type cytochrome CymA from Shewanella oneidensis (strain ATCC 700550 / JCM 31522 / CIP 106686 / LMG 19005 / NCIMB 14063 / MR-1).